We begin with the raw amino-acid sequence, 433 residues long: Putative ankyrin repeat protein R784 (433 aa).

ANK repeat units lie at residues asparagine 44–valine 70, asparagine 71–leucine 101, leucine 102–isoleucine 131, phenylalanine 179–serine 205, valine 206–serine 235, arginine 237–alanine 264, glutamine 265–phenylalanine 294, asparagine 296–tyrosine 321, methionine 322–serine 351, and asparagine 380–glutamate 409.

The protein is Putative ankyrin repeat protein R784 of Acanthamoeba polyphaga mimivirus (APMV).